The sequence spans 139 residues: Deoxyuridine 5'-triphosphate nucleotidohydrolase (139 aa).

Residues 58-60, N71, 75-77, and M85 each bind substrate; these read RSG and LID.

It belongs to the dUTPase family. It depends on Mg(2+) as a cofactor.

The catalysed reaction is dUTP + H2O = dUMP + diphosphate + H(+). The protein operates within pyrimidine metabolism; dUMP biosynthesis; dUMP from dCTP (dUTP route): step 2/2. Its function is as follows. This enzyme is involved in nucleotide metabolism: it produces dUMP, the immediate precursor of thymidine nucleotides and it decreases the intracellular concentration of dUTP so that uracil cannot be incorporated into DNA. The chain is Deoxyuridine 5'-triphosphate nucleotidohydrolase from Gamma-proteobacterium EBAC31A08.